Here is a 159-residue protein sequence, read N- to C-terminus: Cytochrome b6-f complex subunit 4 (159 aa).

The next 3 membrane-spanning stretches (helical) occupy residues 35–55, 93–113, and 127–147; these read ILIFGVVILGTIFGVIALAVL, LLGVVLMAAIPIGLALVPFIE, and ATAVFLIGTVVTMYLGIGAMI.

It belongs to the cytochrome b family. PetD subfamily. As to quaternary structure, the 4 large subunits of the cytochrome b6-f complex are cytochrome b6, subunit IV (17 kDa polypeptide, PetD), cytochrome f and the Rieske protein, while the 4 small subunits are PetG, PetL, PetM and PetN. The complex functions as a dimer.

The protein resides in the cell inner membrane. Functionally, component of the cytochrome b6-f complex, which mediates electron transfer between photosystem II (PSII) and photosystem I (PSI), cyclic electron flow around PSI, and state transitions. In Gloeobacter violaceus (strain ATCC 29082 / PCC 7421), this protein is Cytochrome b6-f complex subunit 4.